The following is a 198-amino-acid chain: Phosphoheptose isomerase (198 aa).

An SIS domain is found at I34–G196. N49–G51 provides a ligand contact to substrate. Zn(2+) contacts are provided by H58 and N62. Substrate contacts are provided by residues N62, N91 to D92, S117 to S119, S122, and Q172. Positions 172 and 180 each coordinate Zn(2+).

This sequence belongs to the SIS family. GmhA subfamily. In terms of assembly, homotetramer. The cofactor is Zn(2+).

Its subcellular location is the cytoplasm. The catalysed reaction is 2 D-sedoheptulose 7-phosphate = D-glycero-alpha-D-manno-heptose 7-phosphate + D-glycero-beta-D-manno-heptose 7-phosphate. It participates in carbohydrate biosynthesis; D-glycero-D-manno-heptose 7-phosphate biosynthesis; D-glycero-alpha-D-manno-heptose 7-phosphate and D-glycero-beta-D-manno-heptose 7-phosphate from sedoheptulose 7-phosphate: step 1/1. Its function is as follows. Catalyzes the isomerization of sedoheptulose 7-phosphate in D-glycero-D-manno-heptose 7-phosphate. The sequence is that of Phosphoheptose isomerase from Alteromonas mediterranea (strain DSM 17117 / CIP 110805 / LMG 28347 / Deep ecotype).